The sequence spans 729 residues: Phosphoribosylformylglycinamidine synthase subunit PurL (729 aa).

H54 is a catalytic residue. The ATP site is built by Y57 and K96. E98 serves as a coordination point for Mg(2+). Substrate contacts are provided by residues 99–102 (SHNH) and R121. Catalysis depends on H100, which acts as the Proton acceptor. D122 serves as a coordination point for Mg(2+). Substrate is bound at residue Q245. Residue D273 coordinates Mg(2+). 317–319 (ETQ) serves as a coordination point for substrate. 2 residues coordinate ATP: D495 and G532. N533 contributes to the Mg(2+) binding site. Residue S535 coordinates substrate.

It belongs to the FGAMS family. In terms of assembly, monomer. Part of the FGAM synthase complex composed of 1 PurL, 1 PurQ and 2 PurS subunits.

It localises to the cytoplasm. The catalysed reaction is N(2)-formyl-N(1)-(5-phospho-beta-D-ribosyl)glycinamide + L-glutamine + ATP + H2O = 2-formamido-N(1)-(5-O-phospho-beta-D-ribosyl)acetamidine + L-glutamate + ADP + phosphate + H(+). Its pathway is purine metabolism; IMP biosynthesis via de novo pathway; 5-amino-1-(5-phospho-D-ribosyl)imidazole from N(2)-formyl-N(1)-(5-phospho-D-ribosyl)glycinamide: step 1/2. Its function is as follows. Part of the phosphoribosylformylglycinamidine synthase complex involved in the purines biosynthetic pathway. Catalyzes the ATP-dependent conversion of formylglycinamide ribonucleotide (FGAR) and glutamine to yield formylglycinamidine ribonucleotide (FGAM) and glutamate. The FGAM synthase complex is composed of three subunits. PurQ produces an ammonia molecule by converting glutamine to glutamate. PurL transfers the ammonia molecule to FGAR to form FGAM in an ATP-dependent manner. PurS interacts with PurQ and PurL and is thought to assist in the transfer of the ammonia molecule from PurQ to PurL. The sequence is that of Phosphoribosylformylglycinamidine synthase subunit PurL from Staphylococcus aureus (strain bovine RF122 / ET3-1).